Here is a 133-residue protein sequence, read N- to C-terminus: Nickel-responsive regulator (133 aa).

H76, H87, H89, and C95 together coordinate Ni(2+).

The protein belongs to the transcriptional regulatory CopG/NikR family. As to quaternary structure, homotetramer. Requires Ni(2+) as cofactor.

Transcriptional repressor of the nikABCDE operon. Is active in the presence of excessive concentrations of intracellular nickel. The chain is Nickel-responsive regulator from Escherichia coli (strain SE11).